The following is a 924-amino-acid chain: Inositol polyphosphate 4-phosphatase type II (924 aa).

A compositionally biased stretch (basic and acidic residues) spans Met1–Gln13. Disordered stretches follow at residues Met1–Pro24, Ile481–Tyr516, and Asp546–Ser570. In terms of domain architecture, C2 spans Asp23–Leu165.

The protein belongs to the inositol 3,4-bisphosphate 4-phosphatase family. As to expression, widely expressed with highest levels occurring in the skeletal muscle and heart.

It catalyses the reaction a 1,2-diacyl-sn-glycero-3-phospho-(1D-myo-inositol-3,4-bisphosphate) + H2O = a 1,2-diacyl-sn-glycero-3-phospho-(1D-myo-inositol-3-phosphate) + phosphate. The enzyme catalyses 1D-myo-inositol 1,3,4-trisphosphate + H2O = 1D-myo-inositol 1,3-bisphosphate + phosphate. It carries out the reaction 1D-myo-inositol 3,4-bisphosphate + H2O = 1D-myo-inositol 3-phosphate + phosphate. Its pathway is signal transduction; phosphatidylinositol signaling pathway. Strongly inhibited by inositol hexakisphosphate. In terms of biological role, catalyzes the hydrolysis of the 4-position phosphate of phosphatidylinositol 3,4-bisphosphate, inositol 1,3,4-trisphosphate and inositol 3,4-trisphosphate. Plays a role in the late stages of macropinocytosis by dephosphorylating phosphatidylinositol 3,4-bisphosphate in membrane ruffles. The lipid phosphatase activity is critical for tumor suppressor function. Antagonizes the PI3K-AKT/PKB signaling pathway by dephosphorylating phosphoinositides and thereby modulating cell cycle progression and cell survival. This Homo sapiens (Human) protein is Inositol polyphosphate 4-phosphatase type II (INPP4B).